The chain runs to 445 residues: UPF0210 protein SMU_73 (445 aa).

This sequence belongs to the UPF0210 family. In terms of assembly, homodimer.

The protein is UPF0210 protein SMU_73 of Streptococcus mutans serotype c (strain ATCC 700610 / UA159).